Reading from the N-terminus, the 400-residue chain is MKEKTIIIVGGGQAAAMAAASLRQQGFTGELHLFSDERHLPYERPPLSKSMLLEDSPQLQQVLPANWWQENNVHLHSGVTIKSLGRDTRELVLTNGESWQWDQLFMATGAAARPLPLLDALGERCFTLRHADDAARLREVLQPERSVVIVGAGTIGLELAASATQRGCKVTVIELAATVMGRNAPPPVQRYLLQRHQQAGVRILLNNAIEHVVDGEKVELTLQSGETLQADVVIYGIGISANDQLAREANLDTANGIVIDEACRTCDPAIFAGGDVAITRLDNGALHRCESWENANNQAQIAAAAMLGLPLPRLPPPWFWSDQYSDNLQFIGDMHGDDWICRGNPETQKAIWFNLQNGVLIGAVTLNQGREIRPIRKWIQSGKTFNAKLLTDEDIALKSL.

5-36 serves as a coordination point for FAD; sequence TIIIVGGGQAAAMAAASLRQQGFTGELHLFSD. 146-174 contacts NAD(+); the sequence is SVVIVGAGTIGLELAASATQRGCKVTVIE.

It belongs to the bacterial ring-hydroxylating dioxygenase ferredoxin reductase family. As to quaternary structure, this dioxygenase system consists of four proteins: the two subunits of the hydroxylase component (HcaE and HcaF), a ferredoxin (HcaC) and a ferredoxin reductase (HcaD). Requires FAD as cofactor.

It carries out the reaction 2 reduced [2Fe-2S]-[ferredoxin] + NAD(+) + H(+) = 2 oxidized [2Fe-2S]-[ferredoxin] + NADH. It functions in the pathway aromatic compound metabolism; 3-phenylpropanoate degradation. In terms of biological role, part of the multicomponent 3-phenylpropionate dioxygenase, that converts 3-phenylpropionic acid (PP) and cinnamic acid (CI) into 3-phenylpropionate-dihydrodiol (PP-dihydrodiol) and cinnamic acid-dihydrodiol (CI-dihydrodiol), respectively. This is 3-phenylpropionate/cinnamic acid dioxygenase ferredoxin--NAD(+) reductase component from Escherichia coli O17:K52:H18 (strain UMN026 / ExPEC).